A 312-amino-acid polypeptide reads, in one-letter code: Methionyl-tRNA formyltransferase (312 aa).

Position 117–120 (117–120 (SLLP)) interacts with (6S)-5,6,7,8-tetrahydrofolate.

Belongs to the Fmt family.

It catalyses the reaction L-methionyl-tRNA(fMet) + (6R)-10-formyltetrahydrofolate = N-formyl-L-methionyl-tRNA(fMet) + (6S)-5,6,7,8-tetrahydrofolate + H(+). Functionally, attaches a formyl group to the free amino group of methionyl-tRNA(fMet). The formyl group appears to play a dual role in the initiator identity of N-formylmethionyl-tRNA by promoting its recognition by IF2 and preventing the misappropriation of this tRNA by the elongation apparatus. The polypeptide is Methionyl-tRNA formyltransferase (Bordetella bronchiseptica (strain ATCC BAA-588 / NCTC 13252 / RB50) (Alcaligenes bronchisepticus)).